The following is a 270-amino-acid chain: 3-methyl-2-oxobutanoate hydroxymethyltransferase (270 aa).

Asp50 and Asp89 together coordinate Mg(2+). Residues 50–51 (DS), Asp89, and Lys118 contribute to the 3-methyl-2-oxobutanoate site. Glu120 contacts Mg(2+). Glu187 acts as the Proton acceptor in catalysis.

It belongs to the PanB family. As to quaternary structure, homodecamer; pentamer of dimers. Requires Mg(2+) as cofactor.

It is found in the cytoplasm. The enzyme catalyses 3-methyl-2-oxobutanoate + (6R)-5,10-methylene-5,6,7,8-tetrahydrofolate + H2O = 2-dehydropantoate + (6S)-5,6,7,8-tetrahydrofolate. It participates in cofactor biosynthesis; (R)-pantothenate biosynthesis; (R)-pantoate from 3-methyl-2-oxobutanoate: step 1/2. Functionally, catalyzes the reversible reaction in which hydroxymethyl group from 5,10-methylenetetrahydrofolate is transferred onto alpha-ketoisovalerate to form ketopantoate. This Helicobacter pylori (strain HPAG1) protein is 3-methyl-2-oxobutanoate hydroxymethyltransferase.